The chain runs to 361 residues: MNRNQHKPMFVTFLINILLLQLLNLTNASPSPPITALYAFGDSTVDSGNNNYIPTLFQSNHPPYGKSFPSKLSTGRFSDGKLATDFIVSSLGLKPTLPAYLNPSVKPVDLLTGVSFASAGGGLDDRTAKSSLTITMDKQWSYFEEALGKMKSLVGDSETNRVIKNAVFVISAGTNDMIFNVYDHVLGSLISVSDYQDSLLTKVEVFVQRLYEAGARRITIAGLPPIGCLPVQVTLTSINTPRIFHHRICTEHQNDDSRVYNQKLQKLIFGLSQRFRGSKVLYLDIYSPLIDMIKHPRKYGLEETLRGCCGTGLLEAGPLCQPLSRTCDDVSKYLFFDSVHPSQTAYSVIASFALQKLFPLL.

The N-terminal stretch at 1 to 28 (MNRNQHKPMFVTFLINILLLQLLNLTNA) is a signal peptide. Catalysis depends on Ser-43, which acts as the Nucleophile. Active-site residues include Asp-337 and His-340.

It belongs to the 'GDSL' lipolytic enzyme family.

It is found in the secreted. The polypeptide is GDSL esterase/lipase At2g40250 (Arabidopsis thaliana (Mouse-ear cress)).